Here is a 96-residue protein sequence, read N- to C-terminus: Nucleoid-associated protein DR_0199 (96 aa).

It belongs to the YbaB/EbfC family. In terms of assembly, homodimer.

It is found in the cytoplasm. The protein localises to the nucleoid. Its function is as follows. Binds to DNA and alters its conformation. May be involved in regulation of gene expression, nucleoid organization and DNA protection. The polypeptide is Nucleoid-associated protein DR_0199 (Deinococcus radiodurans (strain ATCC 13939 / DSM 20539 / JCM 16871 / CCUG 27074 / LMG 4051 / NBRC 15346 / NCIMB 9279 / VKM B-1422 / R1)).